The following is a 295-amino-acid chain: Formamidopyrimidine-DNA glycosylase (295 aa).

Pro-2 functions as the Schiff-base intermediate with DNA in the catalytic mechanism. The Proton donor role is filled by Glu-3. Lys-61 (proton donor; for beta-elimination activity) is an active-site residue. DNA is bound by residues His-95, Arg-117, and Arg-159. The FPG-type zinc-finger motif lies at 245 to 279 (HAYGREGEACERCGTPIRRVAFMNRSSYFCPVCQP). Catalysis depends on Arg-269, which acts as the Proton donor; for delta-elimination activity.

Belongs to the FPG family. Monomer. Zn(2+) is required as a cofactor.

The enzyme catalyses Hydrolysis of DNA containing ring-opened 7-methylguanine residues, releasing 2,6-diamino-4-hydroxy-5-(N-methyl)formamidopyrimidine.. It catalyses the reaction 2'-deoxyribonucleotide-(2'-deoxyribose 5'-phosphate)-2'-deoxyribonucleotide-DNA = a 3'-end 2'-deoxyribonucleotide-(2,3-dehydro-2,3-deoxyribose 5'-phosphate)-DNA + a 5'-end 5'-phospho-2'-deoxyribonucleoside-DNA + H(+). In terms of biological role, involved in base excision repair of DNA damaged by oxidation or by mutagenic agents. Acts as a DNA glycosylase that recognizes and removes damaged bases. Has a preference for oxidized purines, such as 7,8-dihydro-8-oxoguanine (8-oxoG). Has AP (apurinic/apyrimidinic) lyase activity and introduces nicks in the DNA strand. Cleaves the DNA backbone by beta-delta elimination to generate a single-strand break at the site of the removed base with both 3'- and 5'-phosphates. This Nocardioides sp. (strain ATCC BAA-499 / JS614) protein is Formamidopyrimidine-DNA glycosylase.